A 232-amino-acid chain; its full sequence is RNA chaperone ProQ (232 aa).

Residues 105 to 182 (EAKARVQAQR…REEQHTPVSD (78 aa)) are disordered. The span at 117 to 136 (QQAKKREAAAAAGEKEDAPR) shows a compositional bias: basic and acidic residues. A compositionally biased stretch (basic residues) spans 137-146 (RERKPRPTTP). The segment covering 147–177 (RRKEGAERKPRAQKPVEKAPKTVKAPREEQH) has biased composition (basic and acidic residues).

It belongs to the ProQ family.

It is found in the cytoplasm. In terms of biological role, RNA chaperone with significant RNA binding, RNA strand exchange and RNA duplexing activities. May regulate ProP activity through an RNA-based, post-transcriptional mechanism. This chain is RNA chaperone ProQ, found in Shigella flexneri serotype 5b (strain 8401).